The sequence spans 282 residues: Urease accessory protein UreD (282 aa).

This sequence belongs to the UreD family. As to quaternary structure, ureD, UreF and UreG form a complex that acts as a GTP-hydrolysis-dependent molecular chaperone, activating the urease apoprotein by helping to assemble the nickel containing metallocenter of UreC. The UreE protein probably delivers the nickel.

Its subcellular location is the cytoplasm. Required for maturation of urease via the functional incorporation of the urease nickel metallocenter. This chain is Urease accessory protein UreD, found in Methylobacterium sp. (strain 4-46).